The primary structure comprises 251 residues: UPF0309 protein SGR_3073 (251 aa).

The 186-residue stretch at 36 to 221 (VADTVASGGR…EQLVARGIEP (186 aa)) folds into the SIS domain.

The protein belongs to the UPF0309 family.

The protein is UPF0309 protein SGR_3073 of Streptomyces griseus subsp. griseus (strain JCM 4626 / CBS 651.72 / NBRC 13350 / KCC S-0626 / ISP 5235).